A 213-amino-acid polypeptide reads, in one-letter code: Thiamine-phosphate synthase (213 aa).

4-amino-2-methyl-5-(diphosphooxymethyl)pyrimidine-binding positions include 39–43 (QLREK) and N71. Positions 72 and 91 each coordinate Mg(2+). S110 contributes to the 4-amino-2-methyl-5-(diphosphooxymethyl)pyrimidine binding site. 136 to 138 (TGT) contacts 2-[(2R,5Z)-2-carboxy-4-methylthiazol-5(2H)-ylidene]ethyl phosphate. Residue K139 participates in 4-amino-2-methyl-5-(diphosphooxymethyl)pyrimidine binding. 2-[(2R,5Z)-2-carboxy-4-methylthiazol-5(2H)-ylidene]ethyl phosphate is bound by residues G166 and 186-187 (VS).

Belongs to the thiamine-phosphate synthase family. Mg(2+) serves as cofactor.

It catalyses the reaction 2-[(2R,5Z)-2-carboxy-4-methylthiazol-5(2H)-ylidene]ethyl phosphate + 4-amino-2-methyl-5-(diphosphooxymethyl)pyrimidine + 2 H(+) = thiamine phosphate + CO2 + diphosphate. The enzyme catalyses 2-(2-carboxy-4-methylthiazol-5-yl)ethyl phosphate + 4-amino-2-methyl-5-(diphosphooxymethyl)pyrimidine + 2 H(+) = thiamine phosphate + CO2 + diphosphate. The catalysed reaction is 4-methyl-5-(2-phosphooxyethyl)-thiazole + 4-amino-2-methyl-5-(diphosphooxymethyl)pyrimidine + H(+) = thiamine phosphate + diphosphate. Its pathway is cofactor biosynthesis; thiamine diphosphate biosynthesis; thiamine phosphate from 4-amino-2-methyl-5-diphosphomethylpyrimidine and 4-methyl-5-(2-phosphoethyl)-thiazole: step 1/1. Condenses 4-methyl-5-(beta-hydroxyethyl)thiazole monophosphate (THZ-P) and 2-methyl-4-amino-5-hydroxymethyl pyrimidine pyrophosphate (HMP-PP) to form thiamine monophosphate (TMP). The polypeptide is Thiamine-phosphate synthase (Clostridium botulinum (strain Eklund 17B / Type B)).